We begin with the raw amino-acid sequence, 655 residues long: Acetyl-coenzyme A synthetase (655 aa).

CoA-binding positions include 193–196 and Thr-313; that span reads RGNK. Residues 389-391, 413-418, Asp-502, and Arg-517 each bind ATP; these read GEP and DTWWQT. Ser-525 is a CoA binding site. Residue Arg-528 coordinates ATP. Positions 539 and 541 each coordinate Mg(2+). Arg-586 is a binding site for CoA. Residue Lys-611 is modified to N6-acetyllysine.

The protein belongs to the ATP-dependent AMP-binding enzyme family. Mg(2+) is required as a cofactor. In terms of processing, acetylated. Deacetylation by the SIR2-homolog deacetylase activates the enzyme.

The catalysed reaction is acetate + ATP + CoA = acetyl-CoA + AMP + diphosphate. In terms of biological role, catalyzes the conversion of acetate into acetyl-CoA (AcCoA), an essential intermediate at the junction of anabolic and catabolic pathways. AcsA undergoes a two-step reaction. In the first half reaction, AcsA combines acetate with ATP to form acetyl-adenylate (AcAMP) intermediate. In the second half reaction, it can then transfer the acetyl group from AcAMP to the sulfhydryl group of CoA, forming the product AcCoA. The chain is Acetyl-coenzyme A synthetase from Psychrobacter cryohalolentis (strain ATCC BAA-1226 / DSM 17306 / VKM B-2378 / K5).